The primary structure comprises 330 residues: Heat-inducible transcription repressor HrcA (330 aa).

Belongs to the HrcA family.

Its function is as follows. Negative regulator of class I heat shock genes (grpE-dnaK-dnaJ and groELS operons). Prevents heat-shock induction of these operons. The chain is Heat-inducible transcription repressor HrcA from Synechococcus sp. (strain RCC307).